The primary structure comprises 565 residues: Formate--tetrahydrofolate ligase (565 aa).

Residue 73–80 participates in ATP binding; that stretch reads TPAGEGKS.

This sequence belongs to the formate--tetrahydrofolate ligase family.

The catalysed reaction is (6S)-5,6,7,8-tetrahydrofolate + formate + ATP = (6R)-10-formyltetrahydrofolate + ADP + phosphate. It participates in one-carbon metabolism; tetrahydrofolate interconversion. This Arthrobacter sp. (strain FB24) protein is Formate--tetrahydrofolate ligase.